Reading from the N-terminus, the 334-residue chain is MVGREKELSIHFVPGCCQLVEEEVNIPSRRVLITGATGLLGRAVYKEFQQSNWHTVGCGFRRARPKFEQVNLLDSEAVHHLIHDFQPHVIVHCAAERRPDVVESQPDAASQLNVGASGNLAKEAAAIGAFLIYISSDYVFDGTNPPYTEEDIPSPLNLYGKTKLDGEKAVLENNLGAAVLRIPVLYGEVEKLEESAVTVMFDKVQFSNKSANMDHWQQRFPTHVKDVASVCRQLAEKRMLDPSIKGTFHWSGNEQMTKYEMACAIADAFNLPSSHLRPITDSPVIGAQRPKNAQLDCSKLETLGIGQRTPFRTGIKESLWPFLIDKRWRQTVFH.

NADP(+)-binding positions include 37-40 (TGLL), 60-62 (FRR), 71-72 (NL), Cys-93, Arg-97, Tyr-159, and Leu-185. Residue Thr-309 is modified to Phosphothreonine. The required for interaction with MAT2A stretch occupies residues 319–334 (LWPFLIDKRWRQTVFH).

This sequence belongs to the dTDP-4-dehydrorhamnose reductase family. MAT2B subfamily. Heterotrimer; composed of a catalytic MAT2A homodimer that binds one regulatory MAT2B chain. Heterohexamer; composed of a central, catalytic MAT2A homotetramer flanked on either side by a regulatory MAT2B chain. NADP binding increases the affinity for MAT2A.

The protein operates within amino-acid biosynthesis; S-adenosyl-L-methionine biosynthesis; S-adenosyl-L-methionine from L-methionine: step 1/1. Regulatory subunit of S-adenosylmethionine synthetase 2, an enzyme that catalyzes the formation of S-adenosylmethionine from methionine and ATP. Regulates MAT2A catalytic activity by changing its kinetic properties, increasing its affinity for L-methionine. Can bind NADP (in vitro). The polypeptide is Methionine adenosyltransferase 2 subunit beta (Mat2b) (Mus musculus (Mouse)).